We begin with the raw amino-acid sequence, 178 residues long: MSRIGKKPIEIPDSVDISINNNEVTVKGPKGELSQVVDQSIILEEEEGQLLVKRPTDSNHHKSLHGLSRSLIANMVEGVTNGFERHLEIVGVGYRAQMQGKNLVLNVGYSHPVTIEPPEGVEIEVPKNNQIIVKGTDKEVVGQVAARIRAVRKPEPYKGKGIKYAEEQIIRKVGKTGK.

This sequence belongs to the universal ribosomal protein uL6 family. Part of the 50S ribosomal subunit.

Its function is as follows. This protein binds to the 23S rRNA, and is important in its secondary structure. It is located near the subunit interface in the base of the L7/L12 stalk, and near the tRNA binding site of the peptidyltransferase center. This Natranaerobius thermophilus (strain ATCC BAA-1301 / DSM 18059 / JW/NM-WN-LF) protein is Large ribosomal subunit protein uL6.